The chain runs to 135 residues: Small ribosomal subunit protein uS11 (135 aa).

It belongs to the universal ribosomal protein uS11 family. Part of the 30S ribosomal subunit. Interacts with proteins S7 and S18. Binds to IF-3.

Functionally, located on the platform of the 30S subunit, it bridges several disparate RNA helices of the 16S rRNA. Forms part of the Shine-Dalgarno cleft in the 70S ribosome. This chain is Small ribosomal subunit protein uS11, found in Polynucleobacter necessarius subsp. necessarius (strain STIR1).